The following is a 122-amino-acid chain: Large ribosomal subunit protein uL14 (122 aa).

This sequence belongs to the universal ribosomal protein uL14 family. As to quaternary structure, part of the 50S ribosomal subunit. Forms a cluster with proteins L3 and L19. In the 70S ribosome, L14 and L19 interact and together make contacts with the 16S rRNA in bridges B5 and B8.

Binds to 23S rRNA. Forms part of two intersubunit bridges in the 70S ribosome. This is Large ribosomal subunit protein uL14 from Burkholderia multivorans (strain ATCC 17616 / 249).